The following is a 447-amino-acid chain: Trichothecene C-3 esterase (447 aa).

Positions 1–22 (MALNRLVFSLSLWLGFIGAAQA) are cleaved as a signal peptide. Residues Asn-59, Asn-66, Asn-136, and Asn-189 are each glycosylated (N-linked (GlcNAc...) asparagine). The Charge relay system role is filled by Ser-202. N-linked (GlcNAc...) asparagine glycosylation is found at Asn-238, Asn-284, and Asn-314. Active-site charge relay system residues include Asp-352 and His-384. 2 N-linked (GlcNAc...) asparagine glycosylation sites follow: Asn-389 and Asn-423.

The protein belongs to the AB hydrolase superfamily. Lipase family.

It participates in sesquiterpene biosynthesis; trichothecene biosynthesis. In terms of biological role, trichothecene C-3 esterase; part of the core gene cluster that mediates the biosynthesis of trichothecenes, a very large family of chemically related bicyclic sesquiterpene compounds acting as mycotoxins, including T2-toxin. The biosynthesis of trichothecenes begins with the cyclization of farnesyl diphosphate to trichodiene and is catalyzed by the trichodiene synthase TRI5. Trichodiene undergoes a series of oxygenations catalyzed by the cytochrome P450 monooxygenase TRI4. TRI4 controls the addition of four oxygens at C-2, C-3, C-11, and the C-12, C-13-epoxide to form the intermediate isotrichotriol. Isotrichotriol then undergoes a non-enzymatic isomerization and cyclization to form isotrichodermol. During this process, the oxygen at the C-2 position becomes the pyran ring oxygen and the hydroxyl group at C-11 is lost. More complex type A trichothecenes are built by modifying isotrichodermol through a series of paired hydroxylation and acetylation or acylation steps. Isotrichodermol is converted to isotrichodermin by the acetyltransferase TRI101. TRI101 encodes a C-3 transacetylase that acts as a self-protection or resistance factor during biosynthesis and that the presence of a free C-3 hydroxyl group is a key component of Fusarium trichothecene phytotoxicity. A second hydroxyl group is added to C-15 by the trichothecene C-15 hydroxylase TRI11, producing 15-decalonectrin, which is then acetylated by TRI3, producing calonectrin. A third hydroxyl group is added at C-4 by the cytochrome P450 monooxygenase TRI13, converting calonectrin to 3,15-diacetoxyspirpenol, which is subsequently acetylated by the acetyltransferase TRI7. A fourth hydroxyl group is added to C-8 by the cytochrome P450 monooxygenase TRI1, followed by the addition of an isovaleryl moiety by TRI16. Finally, the acetyl group is removed from the C-3 position by the trichothecene C-3 esterase TRI8 to produce T-2 toxin. This Fusarium sporotrichioides protein is Trichothecene C-3 esterase.